The chain runs to 148 residues: Deoxyuridine 5'-triphosphate nucleotidohydrolase (148 aa).

Substrate is bound by residues 67 to 69 (RSG), Asn-80, 84 to 86 (LID), and Met-94.

This sequence belongs to the dUTPase family. Mg(2+) is required as a cofactor.

The catalysed reaction is dUTP + H2O = dUMP + diphosphate + H(+). The protein operates within pyrimidine metabolism; dUMP biosynthesis; dUMP from dCTP (dUTP route): step 2/2. This enzyme is involved in nucleotide metabolism: it produces dUMP, the immediate precursor of thymidine nucleotides and it decreases the intracellular concentration of dUTP so that uracil cannot be incorporated into DNA. This chain is Deoxyuridine 5'-triphosphate nucleotidohydrolase, found in Burkholderia mallei (strain NCTC 10247).